Here is an 801-residue protein sequence, read N- to C-terminus: MPFSKAWRSAVYPDFREQGAYINYKATKDILHRMKEDIANPSTPDELYNSLLLQKCRVYKWCEKKIKELLTVAEALMAASDYLTEEDTKTNLSLVLNTLGSGNMKCLPPNEARLLADSITHELLRFVECCNLNTDTIEHIIGRMYRYAVLGPTGKHWNNIMTEYDYHKLSIHEIFYLLSKVYDRVTATENMRIVKRSGIPAGTVGSQVFDRRSVKYWVHLQDLPFVIARIIPHLPHSTFKETYQTCKERNIPFTLGSPVSSVYWDNNEFLLYHRRLERLEGATLIRMRWYGDPLENDWNKLGPNDSVFMEIKVHHEAWSGERSNKRRFALKEKEVNSYVHGELDLNPALEKLRAKKASKKELHNFMDLSTEIVTKIDAYDLKPVIRTQCSRAAFQRGIDQSIRVSIDTDLRVCAEDFGLGHHWRYSGVDAPVSYFPYAVVEIKLQCAENERIAPWIEELMSCRYMESVPKFSKYAHGIASLYGHTPFIKMVPYWMHQLDIDIRASTKPEQNQWDPTVGLASGCWERTTDRAIFGVGHAQTQTVGASEAQFLPRTDYTRVYQKALHGIRGEGVATPATADNFQDAEAEGGCASGTAGSRKQQLQPRLPAHTLQYDVDRRHKAYTTFHLYPFAEYGVESLCFTPASGKNAAAEVLSGLIPWQTGKRIRVPQKYDPKTLLTSERYMLKWTEHATRLGLVGLGVIQFGNSMTLPGDVTQLSSFWRANFHIVLGIALVLVALMTLMYALMTFKARSRRVYARKKIRFDDSWGPTVLTVFLAFGICVIAMMHILGRYGPMLTGDDNF.

Over 1–692 the chain is Cytoplasmic; it reads MPFSKAWRSA…MLKWTEHATR (692 aa). ATP is bound by residues Lys215, Arg286, Arg288, Lys312, Lys325, and Arg391. Glu441 contacts Mn(2+). Residue Lys473 is part of the active site. A helical membrane pass occupies residues 693–713; it reads LGLVGLGVIQFGNSMTLPGDV. The Vacuolar portion of the chain corresponds to 714–723; sequence TQLSSFWRAN. The helical transmembrane segment at 724–744 threads the bilayer; sequence FHIVLGIALVLVALMTLMYAL. The Cytoplasmic portion of the chain corresponds to 745–768; it reads MTFKARSRRVYARKKIRFDDSWGP. Residues 769-789 traverse the membrane as a helical segment; it reads TVLTVFLAFGICVIAMMHILG. Over 790–801 the chain is Vacuolar; that stretch reads RYGPMLTGDDNF.

The protein belongs to the VTC4 family. In terms of assembly, the VTC core complex is an integral membrane heterooligomer composed of at least the catalytic subunit vtc4 and the accessory subunits vtc1 and vtc2. vtc1 is a small membrane protein without hydrophilic domain. Vtc2 and vtc4 are related and have 2 hydrophilic domains that face the cytosol, an N-terminal SPX domain and the central core domain. The central core in vtc4 is the catalytic domain. It depends on Mn(2+) as a cofactor.

Its subcellular location is the acidocalcisome membrane. The enzyme catalyses [phosphate](n) + ATP = [phosphate](n+1) + ADP. Activity of the enzyme is Mn(2+)-dependent and enhanced in the presence of pyrophosphate (PPi). Functionally, component of a polyphosphate synthase complex that utilizes ATP to synthesize and translocate polyphosphate to acidocalcisomes in epimastigotes, insect-stages of Trypanosoma brucei. Catalytic subunit of the vacuolar transporter chaperone (VTC) complex. The VTC complex acts as a vacuolar polyphosphate polymerase that catalyzes the synthesis of inorganic polyphosphate (polyP) via transfer of phosphate from ATP to a growing polyP chain, releasing ADP. VTC exposes its catalytic domain vtc4 to the cytosol, where the growing polyP chain winds through a tunnel-shaped pocket, integrating cytoplasmic polymer synthesis with polyP membrane translocation. The VTC complex carries 9 vacuolar transmembrane domains, which are likely to constitute the translocation channel into the organelle lumen. PolyP synthesis is tightly coupled to its transport into the vacuole lumen, in order to avoid otherwise toxic intermediates in the cytosol, and it depends on the proton gradient across the membrane, formed by V-ATPase. The VTC complex also plays a role in vacuolar membrane fusion. Essential for infection and parasite survival in the mammalian host. This is Vacuolar transporter chaperone complex subunit 4 from Trypanosoma cruzi (strain CL Brener).